We begin with the raw amino-acid sequence, 444 residues long: MDHHLDPNLDNLFEMYGESVEECATQVANGTLLTLLQMLVLVWMFFLVWRLSLPPRIQTFLHIAMTTLTVAWFSPKKLESVMIFHTFSLISLFCAVQKLNGYRILGLNIMLLIALQNICSRANADDYFLTLRGVLMMHIMRLSTASFAIVDSNVRSISFDQLTLYLEYIYFPPFIIFGPYVTFDQFVKMREKKWTRFEEQLGVFVQGSVLIFIGITLAIISSCYVDFFEPGSQFVEDALTAMSFRCSHYFICLSTQAFAMFLGSKIVVANPVNIEFSRSTLQTVSEWNRPFHTYLHENIFKRRFFQSTALNVLLTFAVSALLHARDYQMWLTLLALGFIAYSETVFRKRIADRFSMCVAAKPCSVRANRRICKHKHASFSKRVLIINLFFMILSMYHLVFTGMTFTDDYAAIGYPFSHTWTIWGTHYYSSFIVSFAFLALSKII.

10 helical membrane passes run Asn-29–Trp-49, Val-81–Gly-101, Phe-128–Val-150, Thr-163–Phe-183, Leu-201–Ser-221, Tyr-249–Ala-269, Phe-304–Ala-324, Asp-326–Phe-346, Val-383–Met-403, and Trp-420–Leu-440. His-323 is an active-site residue.

Belongs to the membrane-bound acyltransferase family. Porcupine subfamily.

It localises to the membrane. It catalyses the reaction [Wnt protein]-L-serine + (9Z)-hexadecenoyl-CoA = [Wnt protein]-O-(9Z)-hexadecenoyl-L-serine + CoA. Key regulator of the Wnt signaling pathway that mediates lipid modification of Wnt proteins. Acts as a protein-serine O-palmitoleoyltransferase that catalyzes the attachment of palmitoleate, a 16-carbon monounsaturated fatty acid (C16:1(9Z)), to Wnt proteins. Serine palmitoleoylation of WNT proteins is required for efficient binding to frizzled receptors. Has a role in cell specification, specifically in blastomere signaling. Involved in cytosketetal polarity. Required for the orientation of mitotic spindle axis. The protein is Protein-serine O-palmitoleoyltransferase porcupine of Caenorhabditis briggsae.